A 504-amino-acid chain; its full sequence is Maturase K (504 aa).

This sequence belongs to the intron maturase 2 family. MatK subfamily.

It is found in the plastid. Its subcellular location is the chloroplast. In terms of biological role, usually encoded in the trnK tRNA gene intron. Probably assists in splicing its own and other chloroplast group II introns. The polypeptide is Maturase K (Lepidium campestre (Field pepperwort)).